We begin with the raw amino-acid sequence, 294 residues long: NAD kinase (294 aa).

Aspartate 74 functions as the Proton acceptor in the catalytic mechanism. NAD(+) contacts are provided by residues 74–75, 148–149, histidine 159, arginine 176, aspartate 178, 189–194, and glutamine 249; these read DG, NE, and TAYSLS.

The protein belongs to the NAD kinase family. A divalent metal cation is required as a cofactor.

It is found in the cytoplasm. The catalysed reaction is NAD(+) + ATP = ADP + NADP(+) + H(+). Functionally, involved in the regulation of the intracellular balance of NAD and NADP, and is a key enzyme in the biosynthesis of NADP. Catalyzes specifically the phosphorylation on 2'-hydroxyl of the adenosine moiety of NAD to yield NADP. In Vibrio cholerae serotype O1 (strain ATCC 39541 / Classical Ogawa 395 / O395), this protein is NAD kinase.